Consider the following 737-residue polypeptide: Protein bicaudal D homolog (737 aa).

Coiled-coil stretches lie at residues 1–255 (MAES…RNAE), 292–319 (GSSDVKVRELEAAKEGLQEELKSREKIF), and 547–684 (AENE…DRDR). The segment at 72 to 97 (YRSQHQRSTRSELENEESLLEESSAK) is disordered. Positions 686-737 (VFKRSSTRAPTRETYQPPRAVRYPGSTTTAQQPAPSSSGGSRGGPRRGDNQQ) are disordered. Over residues 710 to 719 (GSTTTAQQPA) the composition is skewed to polar residues.

This sequence belongs to the BicD family. In terms of assembly, component of a dynein-regulating complex composed of at least bicd-1, dlc-1 and egal-1. Interacts with egal-1 and unc-83. In terms of tissue distribution, expressed in the excretory cell, body wall muscles, vulval muscle cells, PVD and FLP sensory neurons and AVF interneurons.

It is found in the nucleus envelope. Its subcellular location is the perikaryon. The protein localises to the cell projection. The protein resides in the dendrite. Part of a complex with dlc-1 and egal-1, which is recruited to the nuclear envelope by unc-83, where in turn, it recruits dynein to the nuclear surface and regulates nuclear migration in hypodermal precursor cells. Required for the formation of dendritic branches of PVD sensory neurons. This is Protein bicaudal D homolog from Caenorhabditis elegans.